The sequence spans 268 residues: Probable membrane transporter protein HI_0806 (268 aa).

8 helical membrane-spanning segments follow: residues 6–26 (IFILLICGICTNMVSAIFGIG), 46–66 (VISATSLTIVMCTALINLLFF), 79–99 (ILWSIAMVIGVQIGFELSFYF), 101–121 (TAIISLIFTVSLSALAIKTFL), 147–167 (GGGLIAGITGIGGGSILAPLV), 178–198 (IAVYTNYMMIIGGIGNLYGYL), 212–232 (LGLNFLVVGVVTLGSFEMSFF), and 248–268 (LLAIILFCIAAYMCILEFVFH).

It belongs to the 4-toluene sulfonate uptake permease (TSUP) (TC 2.A.102) family.

The protein resides in the cell membrane. The sequence is that of Probable membrane transporter protein HI_0806 from Haemophilus influenzae (strain ATCC 51907 / DSM 11121 / KW20 / Rd).